The following is a 253-amino-acid chain: 4-hydroxy-tetrahydrodipicolinate reductase (253 aa).

NAD(+) contacts are provided by residues 8 to 13 (GAKGRM), aspartate 34, 76 to 78 (GTT), and 108 to 111 (APNF). Histidine 138 (proton donor/acceptor) is an active-site residue. Residue histidine 139 participates in (S)-2,3,4,5-tetrahydrodipicolinate binding. Lysine 142 serves as the catalytic Proton donor. Residue 148–149 (GT) coordinates (S)-2,3,4,5-tetrahydrodipicolinate.

The protein belongs to the DapB family.

The protein resides in the cytoplasm. It carries out the reaction (S)-2,3,4,5-tetrahydrodipicolinate + NAD(+) + H2O = (2S,4S)-4-hydroxy-2,3,4,5-tetrahydrodipicolinate + NADH + H(+). It catalyses the reaction (S)-2,3,4,5-tetrahydrodipicolinate + NADP(+) + H2O = (2S,4S)-4-hydroxy-2,3,4,5-tetrahydrodipicolinate + NADPH + H(+). It functions in the pathway amino-acid biosynthesis; L-lysine biosynthesis via DAP pathway; (S)-tetrahydrodipicolinate from L-aspartate: step 4/4. Its function is as follows. Catalyzes the conversion of 4-hydroxy-tetrahydrodipicolinate (HTPA) to tetrahydrodipicolinate. This Bifidobacterium animalis subsp. lactis (strain AD011) protein is 4-hydroxy-tetrahydrodipicolinate reductase.